The following is a 561-amino-acid chain: Asparagine synthetase [glutamine-hydrolyzing] (561 aa).

Catalysis depends on Cys2, which acts as the For GATase activity. Positions 2–191 (CGIWALFGSD…PGHYEVLDLK (190 aa)) constitute a Glutamine amidotransferase type-2 domain. Residues 49-53 (RLAVV), 75-77 (NGE), and Asp97 each bind L-glutamine. An Asparagine synthetase domain is found at 213–536 (HALYDNVEKL…PGRADWLSHY (324 aa)). ATP is bound by residues Leu256, Ile288, and 363–364 (SG). Lys385 bears the N6-acetyllysine mark. The residue at position 545 (Thr545) is a Phosphothreonine. Position 557 is a phosphoserine (Ser557).

It catalyses the reaction L-aspartate + L-glutamine + ATP + H2O = L-asparagine + L-glutamate + AMP + diphosphate + H(+). Its pathway is amino-acid biosynthesis; L-asparagine biosynthesis; L-asparagine from L-aspartate (L-Gln route): step 1/1. This Homo sapiens (Human) protein is Asparagine synthetase [glutamine-hydrolyzing] (ASNS).